Reading from the N-terminus, the 247-residue chain is Cell division protein ZapD (247 aa).

It belongs to the ZapD family. In terms of assembly, interacts with FtsZ.

It is found in the cytoplasm. Cell division factor that enhances FtsZ-ring assembly. Directly interacts with FtsZ and promotes bundling of FtsZ protofilaments, with a reduction in FtsZ GTPase activity. The sequence is that of Cell division protein ZapD from Salmonella arizonae (strain ATCC BAA-731 / CDC346-86 / RSK2980).